Here is a 139-residue protein sequence, read N- to C-terminus: Large ribosomal subunit protein bL20 (139 aa).

The protein belongs to the bacterial ribosomal protein bL20 family.

In terms of biological role, binds directly to 23S ribosomal RNA and is necessary for the in vitro assembly process of the 50S ribosomal subunit. It is not involved in the protein synthesizing functions of that subunit. This chain is Large ribosomal subunit protein bL20, found in Leuconostoc mesenteroides subsp. mesenteroides (strain ATCC 8293 / DSM 20343 / BCRC 11652 / CCM 1803 / JCM 6124 / NCDO 523 / NBRC 100496 / NCIMB 8023 / NCTC 12954 / NRRL B-1118 / 37Y).